The sequence spans 134 residues: Acyl carrier protein, chloroplastic (134 aa).

The N-terminal 51 residues, 1–51, are a transit peptide targeting the chloroplast; sequence MSTTFCSSVSMQATSLAATTRISFQKPALVSRTNLSFNLSRSIPTRLSVSC. The region spanning 55–130 is the Carrier domain; the sequence is PETVEKVSKI…EAAELIDELV (76 aa). O-(pantetheine 4'-phosphoryl)serine is present on Ser-90.

The protein belongs to the acyl carrier protein (ACP) family. Post-translationally, 4'-phosphopantetheine is transferred from CoA to a specific serine of apo-ACP by acpS. This modification is essential for activity because fatty acids are bound in thioester linkage to the sulfhydryl of the prosthetic group. In terms of tissue distribution, seed.

Its subcellular location is the plastid. The protein localises to the chloroplast. Its pathway is lipid metabolism; fatty acid biosynthesis. Its function is as follows. Carrier of the growing fatty acid chain in fatty acid biosynthesis. The sequence is that of Acyl carrier protein, chloroplastic (ACL1.A1) from Brassica napus (Rape).